Consider the following 511-residue polypeptide: D-alanine--D-alanyl carrier protein ligase (511 aa).

Residue 152-153 (TS) coordinates ATP. Position 199 (D199) interacts with D-alanine. 294–299 (NAYGPT) serves as a coordination point for ATP. A D-alanine-binding site is contributed by V303. Residues D385, 397-400 (YGGR), and K499 each bind ATP. K499 contacts D-alanine.

The protein belongs to the ATP-dependent AMP-binding enzyme family. DltA subfamily.

It localises to the cytoplasm. The catalysed reaction is holo-[D-alanyl-carrier protein] + D-alanine + ATP = D-alanyl-[D-alanyl-carrier protein] + AMP + diphosphate. It functions in the pathway cell wall biogenesis; lipoteichoic acid biosynthesis. Functionally, catalyzes the first step in the D-alanylation of lipoteichoic acid (LTA), the activation of D-alanine and its transfer onto the D-alanyl carrier protein (Dcp) DltC. In an ATP-dependent two-step reaction, forms a high energy D-alanyl-AMP intermediate, followed by transfer of the D-alanyl residue as a thiol ester to the phosphopantheinyl prosthetic group of the Dcp. D-alanylation of LTA plays an important role in modulating the properties of the cell wall in Gram-positive bacteria, influencing the net charge of the cell wall. The polypeptide is D-alanine--D-alanyl carrier protein ligase (Streptococcus agalactiae serotype V (strain ATCC BAA-611 / 2603 V/R)).